Here is a 944-residue protein sequence, read N- to C-terminus: Protein translocase subunit SecA (944 aa).

ATP is bound by residues Q77, 95–99, and D484; that span reads GEGKT. Residues 920–944 form a disordered region; that stretch reads EQEKQTKKKKKKKPHDDETTKVKIG. The segment covering 933–944 has biased composition (basic and acidic residues); that stretch reads PHDDETTKVKIG.

Belongs to the SecA family. As to quaternary structure, monomer and homodimer. Part of the essential Sec protein translocation apparatus which comprises SecA, SecYEG and auxiliary proteins SecDF. Other proteins may also be involved.

The protein localises to the cell membrane. The protein resides in the cytoplasm. The catalysed reaction is ATP + H2O + cellular proteinSide 1 = ADP + phosphate + cellular proteinSide 2.. Part of the Sec protein translocase complex. Interacts with the SecYEG preprotein conducting channel. Has a central role in coupling the hydrolysis of ATP to the transfer of proteins into and across the cell membrane, serving as an ATP-driven molecular motor driving the stepwise translocation of polypeptide chains across the membrane. The chain is Protein translocase subunit SecA from Mycoplasma capricolum subsp. capricolum (strain California kid / ATCC 27343 / NCTC 10154).